The sequence spans 258 residues: uncharacterized protein (258 aa).

N-linked (GlcNAc...) asparagine; by host glycans are attached at residues Asn60, Asn104, and Asn113. A compositionally biased stretch (low complexity) spans 147–156; sequence TTRKPGQKTT. Residues 147–183 form a disordered region; that stretch reads TTRKPGQKTTLSRLKTTPNKHTQHKRSTRRTSPRDYN. The span at 157 to 166 shows a compositional bias: polar residues; the sequence is LSRLKTTPNK. The span at 167–177 shows a compositional bias: basic residues; the sequence is HTQHKRSTRRT. The N-linked (GlcNAc...) asparagine; by host glycan is linked to Asn183. Residues 208-228 form a helical membrane-spanning segment; it reads AHSAWILIVIIIIIVVILFFF.

Belongs to the RL11 family.

It is found in the membrane. This is an uncharacterized protein from Human cytomegalovirus (strain AD169) (HHV-5).